Consider the following 528-residue polypeptide: Glucose-6-phosphate isomerase (528 aa).

The Proton donor role is filled by Glu-322. Residues His-351 and Lys-455 contribute to the active site.

Belongs to the GPI family.

The protein localises to the cytoplasm. The enzyme catalyses alpha-D-glucose 6-phosphate = beta-D-fructose 6-phosphate. The protein operates within carbohydrate biosynthesis; gluconeogenesis. It functions in the pathway carbohydrate degradation; glycolysis; D-glyceraldehyde 3-phosphate and glycerone phosphate from D-glucose: step 2/4. Its function is as follows. Catalyzes the reversible isomerization of glucose-6-phosphate to fructose-6-phosphate. In Nostoc sp. (strain PCC 7120 / SAG 25.82 / UTEX 2576), this protein is Glucose-6-phosphate isomerase.